The primary structure comprises 339 residues: Anthranilate phosphoribosyltransferase (339 aa).

Residues G79, 82–83 (GD), S87, 89–92 (NIST), 107–115 (KHGNRSVSS), and S119 each bind 5-phospho-alpha-D-ribose 1-diphosphate. G79 is a binding site for anthranilate. S91 contacts Mg(2+). N110 provides a ligand contact to anthranilate. Position 165 (R165) interacts with anthranilate. Mg(2+) is bound by residues D224 and E225.

It belongs to the anthranilate phosphoribosyltransferase family. Homodimer. Mg(2+) is required as a cofactor.

The catalysed reaction is N-(5-phospho-beta-D-ribosyl)anthranilate + diphosphate = 5-phospho-alpha-D-ribose 1-diphosphate + anthranilate. It participates in amino-acid biosynthesis; L-tryptophan biosynthesis; L-tryptophan from chorismate: step 2/5. Catalyzes the transfer of the phosphoribosyl group of 5-phosphorylribose-1-pyrophosphate (PRPP) to anthranilate to yield N-(5'-phosphoribosyl)-anthranilate (PRA). This Exiguobacterium sibiricum (strain DSM 17290 / CCUG 55495 / CIP 109462 / JCM 13490 / 255-15) protein is Anthranilate phosphoribosyltransferase.